Here is a 312-residue protein sequence, read N- to C-terminus: Glyoxylate/hydroxypyruvate reductase A (312 aa).

Residue Arg227 is part of the active site. Residue His275 is the Proton donor of the active site.

The protein belongs to the D-isomer specific 2-hydroxyacid dehydrogenase family. GhrA subfamily.

Its subcellular location is the cytoplasm. It carries out the reaction glycolate + NADP(+) = glyoxylate + NADPH + H(+). It catalyses the reaction (R)-glycerate + NAD(+) = 3-hydroxypyruvate + NADH + H(+). The catalysed reaction is (R)-glycerate + NADP(+) = 3-hydroxypyruvate + NADPH + H(+). In terms of biological role, catalyzes the NADPH-dependent reduction of glyoxylate and hydroxypyruvate into glycolate and glycerate, respectively. This chain is Glyoxylate/hydroxypyruvate reductase A, found in Salmonella agona (strain SL483).